The chain runs to 268 residues: MKIVGLPTLSDNYTWVIQSENADDKRAWIVDPGESQKVIHYFEENQLQLDGILLTHHHYDHTDGIMGVMDALGEVAIVSNAQGPFKPVTHPVKEGDQVQVLNETFQVIETPGHTDEHICFYHPEALFSGDTLFTGGCGKIWQNPPEQMAESLLKLRALNDDCMVYCGHEYTYANLNFAKIAEPNTPAILDRLAEVKTNTQRNIPCVPARLGLEKQTNPFLRFDHPPLMQTLMERQAQPNESVSTLFATLRAWKDELDQTNILEAGLND.

Positions 56, 58, 60, 61, 113, 130, and 168 each coordinate Zn(2+).

The protein belongs to the metallo-beta-lactamase superfamily. Glyoxalase II family. As to quaternary structure, monomer. Zn(2+) serves as cofactor.

It catalyses the reaction an S-(2-hydroxyacyl)glutathione + H2O = a 2-hydroxy carboxylate + glutathione + H(+). It participates in secondary metabolite metabolism; methylglyoxal degradation; (R)-lactate from methylglyoxal: step 2/2. In terms of biological role, thiolesterase that catalyzes the hydrolysis of S-D-lactoyl-glutathione to form glutathione and D-lactic acid. The sequence is that of Hydroxyacylglutathione hydrolase from Hydrogenovibrio crunogenus (strain DSM 25203 / XCL-2) (Thiomicrospira crunogena).